Here is a 284-residue protein sequence, read N- to C-terminus: MEMO1 family protein STK_20620 (284 aa).

Belongs to the MEMO1 family.

This is MEMO1 family protein STK_20620 from Sulfurisphaera tokodaii (strain DSM 16993 / JCM 10545 / NBRC 100140 / 7) (Sulfolobus tokodaii).